We begin with the raw amino-acid sequence, 340 residues long: Phosphate acyltransferase (340 aa).

The protein belongs to the PlsX family. Homodimer. Probably interacts with PlsY.

It is found in the cytoplasm. It catalyses the reaction a fatty acyl-[ACP] + phosphate = an acyl phosphate + holo-[ACP]. It functions in the pathway lipid metabolism; phospholipid metabolism. Its function is as follows. Catalyzes the reversible formation of acyl-phosphate (acyl-PO(4)) from acyl-[acyl-carrier-protein] (acyl-ACP). This enzyme utilizes acyl-ACP as fatty acyl donor, but not acyl-CoA. The chain is Phosphate acyltransferase from Leptospira biflexa serovar Patoc (strain Patoc 1 / ATCC 23582 / Paris).